The chain runs to 359 residues: MKFTAACILLSATAASAFSPVARFTFSRPTTTSLHAEVTTALIKELREATGAGMMDCKKALTEFDGDIEAAADELRKKGLAKADKKASRIAAEGKIAVASAGGKTVLVEVNCETDFVAKDESFAKFADEAAAAAAAMDGDSVEALMAANGNALEDARAGLVSKIGENIQVRRVATRGSGATTTGAYVHMNRIGVLVEIEGGTEALCTDVAMHVAAMNPAYATQEDVPAADIEKERAFLTAQVEDSGKPADIVAKMVEGRLQKFLAENCLVSQTYVKTNDRTVAKLLEENGAKMIGFTRIAVGEGIEKKVDDFAAEVAAMAGGGKAAPAPKAEEPAAVAPAKADAEDSAEAHKLSVITYP.

Positions 323–341 (GKAAPAPKAEEPAAVAPAK) are enriched in low complexity. The tract at residues 323 to 345 (GKAAPAPKAEEPAAVAPAKADAE) is disordered.

It belongs to the EF-Ts family.

Its subcellular location is the mitochondrion. Associates with the EF-Tu.GDP complex and induces the exchange of GDP to GTP. It remains bound to the aminoacyl-tRNA.EF-Tu.GTP complex up to the GTP hydrolysis stage on the ribosome. The polypeptide is Elongation factor Ts 1, mitochondrial (Thalassiosira pseudonana (Marine diatom)).